A 315-amino-acid polypeptide reads, in one-letter code: Tetraacyldisaccharide 4'-kinase (315 aa).

45–52 lines the ATP pocket; it reads SVGGSGKT.

The protein belongs to the LpxK family.

The enzyme catalyses a lipid A disaccharide + ATP = a lipid IVA + ADP + H(+). Its pathway is glycolipid biosynthesis; lipid IV(A) biosynthesis; lipid IV(A) from (3R)-3-hydroxytetradecanoyl-[acyl-carrier-protein] and UDP-N-acetyl-alpha-D-glucosamine: step 6/6. Transfers the gamma-phosphate of ATP to the 4'-position of a tetraacyldisaccharide 1-phosphate intermediate (termed DS-1-P) to form tetraacyldisaccharide 1,4'-bis-phosphate (lipid IVA). This is Tetraacyldisaccharide 4'-kinase from Aquifex aeolicus (strain VF5).